Consider the following 283-residue polypeptide: MSPHPRNIKLLFALILLLLVYIARQKRFEQQYFDRYLEHPRGGDSTKSKFQTEVDKWVKCMEKDLYVDRESWYYVRFATERCKNASIFLNVPIMKLETNVEYQTGIRSYDMFIATKKEPFVFVTIGNYTDSRTRKNMTDELPTDLKTYGTHLNSSNIYWDYGSLANYLNQSESAGIGHFSTYLKTQVNHKVIDLISIKEEVNNYKIFHEISRMGKLDENGQIVCQIEIRLAPPTSQTIKHLMAGLSLIFNDSRYVLLSFHNLELFLVNYEHQECRGKYLAPYI.

This is an uncharacterized protein from Caenorhabditis elegans.